The following is a 301-amino-acid chain: uncharacterized protein (301 aa).

Catalysis depends on charge relay system residues serine 44 and tyrosine 107. The Proton donor role is filled by tyrosine 133. Lysine 162 acts as the Schiff-base intermediate with substrate in catalysis.

This sequence belongs to the DapA family. In terms of assembly, homotetramer.

The protein resides in the cytoplasm. This is an uncharacterized protein from Pyrobaculum islandicum (strain DSM 4184 / JCM 9189 / GEO3).